A 528-amino-acid chain; its full sequence is Probable histone-arginine methyltransferase 1.4 (528 aa).

Residue Met-1 is modified to N-acetylmethionine. In terms of domain architecture, SAM-dependent MTase PRMT-type spans 144–459 (EAASAKMYFH…QSYTINLTLS (316 aa)). Residues Gln-161, Arg-170, Gly-194, Glu-216, and Glu-246 each coordinate S-adenosyl-L-methionine. Active-site residues include Glu-260 and Glu-269. Thr-274 contributes to the S-adenosyl-L-methionine binding site.

This sequence belongs to the class I-like SAM-binding methyltransferase superfamily. Protein arginine N-methyltransferase family.

Its subcellular location is the nucleus. The protein localises to the cytoplasm. The catalysed reaction is L-arginyl-[protein] + 2 S-adenosyl-L-methionine = N(omega),N(omega)-dimethyl-L-arginyl-[protein] + 2 S-adenosyl-L-homocysteine + 2 H(+). In terms of biological role, methylates (mono- and asymmetric dimethylation) the guanidino nitrogens of arginyl residues in several proteins involved in DNA packaging, transcription regulation, and mRNA stability. Recruited to promoters upon gene activation, methylates histone H3 and activates transcription via chromatin remodeling. This is Probable histone-arginine methyltransferase 1.4 (PRMT14) from Arabidopsis thaliana (Mouse-ear cress).